The following is a 78-amino-acid chain: U-scoloptoxin(04)-Er1e (78 aa).

The first 24 residues, 1-24, serve as a signal peptide directing secretion; that stretch reads MTRHLIFAAMLLVCLFVCWNAVGA. Positions 25 to 28 are excised as a propeptide; that stretch reads RDAR.

The protein belongs to the scoloptoxin-04 family. In terms of processing, contains 2 disulfide bonds. In terms of tissue distribution, expressed by the venom gland.

It localises to the secreted. The sequence is that of U-scoloptoxin(04)-Er1e from Ethmostigmus rubripes (Giant centipede).